A 203-amino-acid polypeptide reads, in one-letter code: Thymidylate kinase (203 aa).

ATP is bound at residue 7-14; it reads GGEGAGKT.

It belongs to the thymidylate kinase family.

The enzyme catalyses dTMP + ATP = dTDP + ADP. Functionally, phosphorylation of dTMP to form dTDP in both de novo and salvage pathways of dTTP synthesis. This is Thymidylate kinase (tmk) from Chlamydia muridarum (strain MoPn / Nigg).